The primary structure comprises 306 residues: Recombination-associated protein RdgC (306 aa).

Belongs to the RdgC family.

It is found in the cytoplasm. It localises to the nucleoid. Its function is as follows. May be involved in recombination. The sequence is that of Recombination-associated protein RdgC from Pseudomonas syringae pv. tomato (strain ATCC BAA-871 / DC3000).